We begin with the raw amino-acid sequence, 481 residues long: Dual specificity protein kinase CLK4 (481 aa).

2 disordered regions span residues 1-47 (MRHS…KPHH) and 102-143 (SKSS…EDDE). Positions 8-19 (HCPDWDSRESWG) are enriched in basic and acidic residues. 2 stretches are compositionally biased toward basic residues: residues 106-119 (VRSR…KRNR) and 126-136 (SHSKSHRRKRS). Phosphoserine occurs at positions 136 and 138. The 317-residue stretch at 159-475 (YEIVDTLGEG…LDEALQHPFF (317 aa)) folds into the Protein kinase domain. ATP is bound by residues 165-173 (LGEGAFGKV) and lysine 189. Aspartate 286 acts as the Proton acceptor in catalysis.

It belongs to the protein kinase superfamily. CMGC Ser/Thr protein kinase family. Lammer subfamily. Interacts with UBL5. Autophosphorylates on all three types of residues. As to expression, expressed in the hippocampus, the cerebellum and the olfactory bulb.

The protein localises to the nucleus. It carries out the reaction L-seryl-[protein] + ATP = O-phospho-L-seryl-[protein] + ADP + H(+). The catalysed reaction is L-threonyl-[protein] + ATP = O-phospho-L-threonyl-[protein] + ADP + H(+). The enzyme catalyses L-tyrosyl-[protein] + ATP = O-phospho-L-tyrosyl-[protein] + ADP + H(+). Its activity is regulated as follows. TG003 inhibits its kinase activity and affects the regulation of alternative splicing mediated by phosphorylation of SR proteins. Dual specificity kinase acting on both serine/threonine and tyrosine-containing substrates. Phosphorylates serine- and arginine-rich (SR) proteins of the spliceosomal complex and may be a constituent of a network of regulatory mechanisms that enable SR proteins to control RNA splicing. Phosphorylates SRSF1 and SRSF3. Required for the regulation of alternative splicing of MAPT/TAU. Regulates the alternative splicing of tissue factor (F3) pre-mRNA in endothelial cells. In Mus musculus (Mouse), this protein is Dual specificity protein kinase CLK4 (Clk4).